The sequence spans 273 residues: 3-methyl-2-oxobutanoate hydroxymethyltransferase (273 aa).

Residues aspartate 53 and aspartate 92 each coordinate Mg(2+). 3-methyl-2-oxobutanoate is bound by residues 53 to 54 (DS), aspartate 92, and lysine 122. Glutamate 124 contributes to the Mg(2+) binding site. Glutamate 191 serves as the catalytic Proton acceptor.

The protein belongs to the PanB family. As to quaternary structure, homodecamer; pentamer of dimers. Requires Mg(2+) as cofactor.

Its subcellular location is the cytoplasm. The enzyme catalyses 3-methyl-2-oxobutanoate + (6R)-5,10-methylene-5,6,7,8-tetrahydrofolate + H2O = 2-dehydropantoate + (6S)-5,6,7,8-tetrahydrofolate. It functions in the pathway cofactor biosynthesis; (R)-pantothenate biosynthesis; (R)-pantoate from 3-methyl-2-oxobutanoate: step 1/2. Its function is as follows. Catalyzes the reversible reaction in which hydroxymethyl group from 5,10-methylenetetrahydrofolate is transferred onto alpha-ketoisovalerate to form ketopantoate. This chain is 3-methyl-2-oxobutanoate hydroxymethyltransferase, found in Phocaeicola vulgatus (strain ATCC 8482 / DSM 1447 / JCM 5826 / CCUG 4940 / NBRC 14291 / NCTC 11154) (Bacteroides vulgatus).